A 294-amino-acid polypeptide reads, in one-letter code: Flavin-dependent thymidylate synthase (294 aa).

The region spanning 27–250 (GFIRVIDYMG…PFTYEAFEEY (224 aa)) is the ThyX domain. Residues Thr73, 96–98 (RHR), and Glu104 contribute to the FAD site. DUMP-binding positions include 93-96 (QWIR), 104-108 (EYSAR), and Arg189. The ThyX motif motif lies at 96-106 (RHRTASVNEYS). FAD contacts are provided by residues 205–207 (NLH) and His211. Residue Arg216 participates in dUMP binding. The active-site Involved in ionization of N3 of dUMP, leading to its activation is the Arg216.

Belongs to the thymidylate synthase ThyX family. In terms of assembly, homotetramer. Requires FAD as cofactor.

It carries out the reaction dUMP + (6R)-5,10-methylene-5,6,7,8-tetrahydrofolate + NADPH + H(+) = dTMP + (6S)-5,6,7,8-tetrahydrofolate + NADP(+). The protein operates within pyrimidine metabolism; dTTP biosynthesis. Its function is as follows. Catalyzes the reductive methylation of 2'-deoxyuridine-5'-monophosphate (dUMP) to 2'-deoxythymidine-5'-monophosphate (dTMP) while utilizing 5,10-methylenetetrahydrofolate (mTHF) as the methyl donor, and NADPH and FADH(2) as the reductant. This is Flavin-dependent thymidylate synthase from Rickettsia prowazekii (strain Madrid E).